A 495-amino-acid polypeptide reads, in one-letter code: ATP synthase subunit beta, chloroplastic (495 aa).

172-179 lines the ATP pocket; sequence GGAGVGKT.

It belongs to the ATPase alpha/beta chains family. F-type ATPases have 2 components, CF(1) - the catalytic core - and CF(0) - the membrane proton channel. CF(1) has five subunits: alpha(3), beta(3), gamma(1), delta(1), epsilon(1). CF(0) has four main subunits: a(1), b(1), b'(1) and c(9-12).

Its subcellular location is the plastid. It is found in the chloroplast thylakoid membrane. The enzyme catalyses ATP + H2O + 4 H(+)(in) = ADP + phosphate + 5 H(+)(out). Produces ATP from ADP in the presence of a proton gradient across the membrane. The catalytic sites are hosted primarily by the beta subunits. In Brimeura amethystina (Spanish hyacinth), this protein is ATP synthase subunit beta, chloroplastic.